Consider the following 185-residue polypeptide: Jasmonate-induced protein homolog (185 aa).

The protein belongs to the jasmonate-induced protein family.

In Atriplex canescens (Fourwing saltbush), this protein is Jasmonate-induced protein homolog.